We begin with the raw amino-acid sequence, 449 residues long: Serine/threonine-protein phosphatase 2A activator 2 (449 aa).

Disordered stretches follow at residues 1-72 and 378-416; these read MDSS…DPST and MSEQDPNALGSEENEEEGGEVEVYDDSDGKRHVHQPTGW. A compositionally biased stretch (pro residues) spans 54-69; the sequence is NPTPVPETPALPPRPD. Over residues 389-403 the composition is skewed to acidic residues; the sequence is EENEEEGGEVEVYDD.

The protein belongs to the PTPA-type PPIase family.

The protein localises to the cytoplasm. The enzyme catalyses [protein]-peptidylproline (omega=180) = [protein]-peptidylproline (omega=0). PPIases accelerate the folding of proteins. It catalyzes the cis-trans isomerization of proline imidic peptide bonds in oligopeptides. Acts as a regulatory subunit for PP2A-like phosphatases modulating their activity or substrate specificity, probably by inducing a conformational change in the catalytic subunit, a direct target of the PPIase. Can reactivate inactive phosphatase PP2A-phosphatase methylesterase complexes (PP2Ai) in presence of ATP and Mg(2+) by dissociating the inactive form from the complex. This Neurospora crassa (strain ATCC 24698 / 74-OR23-1A / CBS 708.71 / DSM 1257 / FGSC 987) protein is Serine/threonine-protein phosphatase 2A activator 2 (rrd-2).